A 1414-amino-acid chain; its full sequence is Alpha-(1-&gt;3)-arabinofuranosyltransferase (1414 aa).

9 helical membrane-spanning segments follow: residues 57–77, 81–101, 128–148, 167–187, 203–223, 273–293, 302–322, 352–372, and 389–409; these read YLFP…PGWV, LWWA…AEAL, AISS…PVIL, VALM…AAVI, AWWL…LLML, STTA…GLAL, LITM…GGLG, LPLA…GSAP, and VAVA…AWTA. The F5/8 type C domain maps to 687–845; that stretch reads YPSDGADLVY…QYDASGFAHP (159 aa). The next 4 membrane-spanning stretches (helical) occupy residues 1253–1273, 1297–1317, 1333–1353, and 1364–1384; these read VGLI…LIPV, ALVA…GAAM, VWDN…GSVL, and YVGH…FLAA. The tract at residues 1393–1414 is disordered; that stretch reads PEPSEDGRSAKPEHTGASAHAG. Basic and acidic residues predominate over residues 1394-1406; it reads EPSEDGRSAKPEH.

The protein resides in the membrane. It carries out the reaction Adds an alpha-D-arabinofuranosyl group from trans,octacis-decaprenylphospho-beta-D-arabinofuranose at the 3-O-position of an alpha-(1-&gt;5)-arabinofuranan chain attached to a beta-(1-&gt;5)-galactofuranan chain.. Its pathway is cell wall biogenesis; cell wall polysaccharide biosynthesis. In terms of biological role, involved in the biosynthesis of the arabinogalactan (AG) region of the mycolylarabinogalactan-peptidoglycan (mAGP) complex, an essential component of the mycobacterial cell wall. Catalyzes the addition of an arabinofuranosyl (Araf) residue from the sugar donor decaprenyl-phospho-arabinose (DPA) on the C-3 of an alpha-(1-&gt;5)-linked Araf from the arabinan backbone of AG. The chain is Alpha-(1-&gt;3)-arabinofuranosyltransferase (aftD) from Mycolicibacterium smegmatis (strain ATCC 700084 / mc(2)155) (Mycobacterium smegmatis).